The chain runs to 121 residues: UPF0145 protein SGR_4080 (121 aa).

Belongs to the UPF0145 family.

The sequence is that of UPF0145 protein SGR_4080 from Streptomyces griseus subsp. griseus (strain JCM 4626 / CBS 651.72 / NBRC 13350 / KCC S-0626 / ISP 5235).